The primary structure comprises 2371 residues: Reducing polyketide synthase DEP5 (2371 aa).

The Ketosynthase family 3 (KS3) domain occupies 47 to 477 (LEPIAVVGMG…GTNAHTIIES (431 aa)). Active-site for beta-ketoacyl synthase activity residues include Cys221, His358, and His399. The interval 593–905 (VFTGQGAQWA…QYLPTLIRGS (313 aa)) is malonyl-CoA:ACP transacylase (MAT) domain. Catalysis depends on Ser685, which acts as the For malonyltransferase activity. The N-terminal hotdog fold stretch occupies residues 982 to 1120 (HDVLGQLTIG…GSIRINTSNK (139 aa)). The interval 982–1158 (HDVLGQLTIG…FNYGPTFQDM (177 aa)) is dehydratase (DH) domain. The region spanning 982–1286 (HDVLGQLTIG…CTAYEAAIPQ (305 aa)) is the PKS/mFAS DH domain. The Proton acceptor; for dehydratase activity role is filled by His1014. Residues 1132–1286 (PQRASGKLWN…CTAYEAAIPQ (155 aa)) are C-terminal hotdog fold. The active-site Proton donor; for dehydratase activity is the Asp1195. The tract at residues 1656-1964 (GKVEAGKVVF…QSLSSTETVL (309 aa)) is enoyl reductase (ER) domain. The ketoreductase (KR) domain stretch occupies residues 1988–2163 (ATYLLVGCLG…KHACAVVLPM (176 aa)). In terms of domain architecture, Carrier spans 2286–2364 (SLVRDHFISK…KFAELVCAAQ (79 aa)). The residue at position 2323 (Ser2323) is an O-(pantetheine 4'-phosphoryl)serine.

It functions in the pathway polyketide biosynthesis. Functionally, part of the gene cluster that mediates the biosynthesis of depudecin, a highly oxidized eleven-carbon linear polyketide that acts as a histone deacetylase (HDAC) inhibitor and makes a small contribution to pathogenesis. The reducing polyketide synthase DEP5 is the central enzyme in depudecin biosynthesis by yielding the backbone polyketide chain. The monooxygenases DEP2 and DEP4, as well as the uncharacterized protein DEP1, then act as tailoring enzymes to modify the intermediate polyketide chain into depudecin. The protein is Reducing polyketide synthase DEP5 of Fusarium langsethiae.